The primary structure comprises 211 residues: FMN-dependent NADH:quinone oxidoreductase 2 (211 aa).

Position 17 to 19 (17 to 19) interacts with FMN; the sequence is SYS.

The protein belongs to the azoreductase type 1 family. In terms of assembly, homodimer. It depends on FMN as a cofactor.

It catalyses the reaction 2 a quinone + NADH + H(+) = 2 a 1,4-benzosemiquinone + NAD(+). It carries out the reaction N,N-dimethyl-1,4-phenylenediamine + anthranilate + 2 NAD(+) = 2-(4-dimethylaminophenyl)diazenylbenzoate + 2 NADH + 2 H(+). Its activity is regulated as follows. Strongly inhibited by Pb(2+) and weakly inhibited by Cu(2+), Hg(2+) and Fe(2+). Stable in presence of Ag(+). In terms of biological role, quinone reductase that provides resistance to thiol-specific stress caused by electrophilic quinones. Contributes to resistance to 2-methylhydroquinone (2-MHQ) and catechol. Exhibits NADH-dependent 2,6-dichloroindophenol (DCIP) oxidoreductase activity. Also exhibits azoreductase activity. Catalyzes the reductive cleavage of the azo bond in aromatic azo compounds to the corresponding amines. Can reduce methyl red. The chain is FMN-dependent NADH:quinone oxidoreductase 2 from Bacillus subtilis (strain 168).